Consider the following 390-residue polypeptide: Queuine tRNA-ribosyltransferase (390 aa).

The Proton acceptor role is filled by aspartate 92. Substrate contacts are provided by residues 92-96, aspartate 146, glutamine 195, and glycine 222; that span reads DSGGF. Residues 253–259 form an RNA binding region; that stretch reads GVGTPED. Aspartate 272 functions as the Nucleophile in the catalytic mechanism. Residues 277 to 281 are RNA binding; important for wobble base 34 recognition; sequence TRNAR. Positions 310, 312, 315, and 354 each coordinate Zn(2+).

Belongs to the queuine tRNA-ribosyltransferase family. In terms of assembly, homodimer. Within each dimer, one monomer is responsible for RNA recognition and catalysis, while the other monomer binds to the replacement base PreQ1. Requires Zn(2+) as cofactor.

It catalyses the reaction 7-aminomethyl-7-carbaguanine + guanosine(34) in tRNA = 7-aminomethyl-7-carbaguanosine(34) in tRNA + guanine. Its pathway is tRNA modification; tRNA-queuosine biosynthesis. In terms of biological role, catalyzes the base-exchange of a guanine (G) residue with the queuine precursor 7-aminomethyl-7-deazaguanine (PreQ1) at position 34 (anticodon wobble position) in tRNAs with GU(N) anticodons (tRNA-Asp, -Asn, -His and -Tyr). Catalysis occurs through a double-displacement mechanism. The nucleophile active site attacks the C1' of nucleotide 34 to detach the guanine base from the RNA, forming a covalent enzyme-RNA intermediate. The proton acceptor active site deprotonates the incoming PreQ1, allowing a nucleophilic attack on the C1' of the ribose to form the product. After dissociation, two additional enzymatic reactions on the tRNA convert PreQ1 to queuine (Q), resulting in the hypermodified nucleoside queuosine (7-(((4,5-cis-dihydroxy-2-cyclopenten-1-yl)amino)methyl)-7-deazaguanosine). In Acidovorax sp. (strain JS42), this protein is Queuine tRNA-ribosyltransferase.